The following is a 411-amino-acid chain: LL-diaminopimelate aminotransferase 1 (411 aa).

Tyr-15 and Gly-42 together coordinate substrate. Pyridoxal 5'-phosphate-binding positions include Tyr-72, Ser-108 to Lys-109, Tyr-132, Asn-187, Tyr-218, and Ser-246 to Ser-248. 3 residues coordinate substrate: Lys-109, Tyr-132, and Asn-187. At Lys-249 the chain carries N6-(pyridoxal phosphate)lysine. Positions 257 and 292 each coordinate pyridoxal 5'-phosphate. Residues Asn-292 and Arg-388 each coordinate substrate.

It belongs to the class-I pyridoxal-phosphate-dependent aminotransferase family. LL-diaminopimelate aminotransferase subfamily. Homodimer. Pyridoxal 5'-phosphate serves as cofactor.

The enzyme catalyses (2S,6S)-2,6-diaminopimelate + 2-oxoglutarate = (S)-2,3,4,5-tetrahydrodipicolinate + L-glutamate + H2O + H(+). It functions in the pathway amino-acid biosynthesis; L-lysine biosynthesis via DAP pathway; LL-2,6-diaminopimelate from (S)-tetrahydrodipicolinate (aminotransferase route): step 1/1. Functionally, involved in the synthesis of meso-diaminopimelate (m-DAP or DL-DAP), required for both lysine and peptidoglycan biosynthesis. Catalyzes the direct conversion of tetrahydrodipicolinate to LL-diaminopimelate. The sequence is that of LL-diaminopimelate aminotransferase 1 from Nostoc sp. (strain PCC 7120 / SAG 25.82 / UTEX 2576).